The primary structure comprises 464 residues: ATP synthase subunit beta (464 aa).

151 to 158 (GGAGVGKT) contributes to the ATP binding site.

It belongs to the ATPase alpha/beta chains family. As to quaternary structure, F-type ATPases have 2 components, CF(1) - the catalytic core - and CF(0) - the membrane proton channel. CF(1) has five subunits: alpha(3), beta(3), gamma(1), delta(1), epsilon(1). CF(0) has three main subunits: a(1), b(2) and c(9-12). The alpha and beta chains form an alternating ring which encloses part of the gamma chain. CF(1) is attached to CF(0) by a central stalk formed by the gamma and epsilon chains, while a peripheral stalk is formed by the delta and b chains.

Its subcellular location is the cell membrane. The enzyme catalyses ATP + H2O + 4 H(+)(in) = ADP + phosphate + 5 H(+)(out). Its function is as follows. Produces ATP from ADP in the presence of a proton gradient across the membrane. The catalytic sites are hosted primarily by the beta subunits. The sequence is that of ATP synthase subunit beta from Clostridium kluyveri (strain ATCC 8527 / DSM 555 / NBRC 12016 / NCIMB 10680 / K1).